Consider the following 494-residue polypeptide: Alpha-amylase-related protein (494 aa).

Residues 1–20 form the signal peptide; that stretch reads MFKFASAVILCVVAASSTLA. Gln21 carries the post-translational modification Pyrrolidone carboxylic acid. Cys48 and Cys104 form a disulfide bridge. Residues Asn118, Gln169, and Asp178 each coordinate Ca(2+). A disulfide bridge connects residues Cys157 and Cys171. Arg206 is a chloride binding site. Residue Asp208 is the Nucleophile of the active site. His212 contributes to the Ca(2+) binding site. The active-site Proton donor is Glu245. Chloride-binding residues include Asn308 and Arg343. 3 disulfide bridges follow: Cys376/Cys382, Cys418/Cys441, and Cys448/Cys460.

The protein belongs to the glycosyl hydrolase 13 family. As to quaternary structure, monomer. Ca(2+) serves as cofactor. The cofactor is chloride.

It localises to the secreted. It catalyses the reaction Endohydrolysis of (1-&gt;4)-alpha-D-glucosidic linkages in polysaccharides containing three or more (1-&gt;4)-alpha-linked D-glucose units.. The chain is Alpha-amylase-related protein (Amyrel) from Drosophila varians (Fruit fly).